The following is a 481-amino-acid chain: MDNHNEVPMSMSAPWASAARVTCLSLDAKCHRPCPSSISASASASGCASDSAAIATTKLRHIAYTQRCSSRLTMLMTVLLLLLPLSFTPAHSCGPGRGLGRRRERNLYPLVLKQTIPNLSEYQSGASGPLEGEIKRDSPKFKDLVPNYNRDILFRDEEGTGADRLMTKRCKEKLNVLAYSVMNEWPGVRLLVTESWDEDHQHGQESLHYEGRAVTIATSDREPSRYGMLARLAVEAGFDWVSYVSRRHIYCSVKSDSSISSHVHGCFTPESTALLESGITKPLSEIAIGDRVLSMGSNGQPVYSEVILFMDRNLEQMQNFVELHTDGGAVLTVTPAHLISVWHPERQQLDYVFADRVEELNYVLVRDPQTGELRPQRVVRVGSVRSKGVVAPLTREGTIVVNSVAASCYAVIDSQSLAHWGLAPMRILAMLQSWMPAKDQLRSSQTEGVVSRAEQQNGIHWYANALYKVKDYVLPKSWRHD.

Cys-93 is lipidated: N-palmitoyl cysteine. Residues Glu-157, Glu-158, Asp-163, Thr-193, Glu-194, Asp-197, and Asp-199 each contribute to the Ca(2+) site. Residue Gly-265 is the site of Cholesterol glycine ester attachment.

This sequence belongs to the hedgehog family. As to quaternary structure, interacts with shf. Post-translationally, the C-terminal part of the hedgehog protein precursor displays an autoproteolysis activity that results in the cleavage of the full-length protein into two parts (N-product and C-product). In addition, the C-terminal part displays a cholesterol transferase activity that results by the covalent attachment of a cholesterol moiety to the C-terminal of the newly generated N-product. The N-product is the active species in both local and long-range signaling, whereas the C-product has no signaling activity. Cholesterylation is required for N-product targeting to lipid rafts and multimerization. In terms of processing, N-palmitoylation by Rasp of the hedgehog N-product, within the secretory pathway, is required for the embryonic and larval patterning activities of the hedgehog signal.

Its subcellular location is the nucleus. It is found in the cytoplasm. It localises to the cell membrane. The catalysed reaction is glycyl-L-cysteinyl-[protein] + cholesterol + H(+) = [protein]-C-terminal glycyl cholesterol ester + N-terminal L-cysteinyl-[protein]. Its function is as follows. The C-terminal part of the hedgehog protein precursor displays an autoproteolysis activity that results in the cleavage of the full-length protein into two parts (N-product and C-product). In addition, the C-terminal part displays a cholesterol transferase activity that results by the covalent attachment of a cholesterol moiety to the C-terminal of the newly generated N-product. Once cleaved, the C-product has no signaling activity and diffuses from the cell. The dually lipidated hedgehog protein N-product is a morphogen which is essential for a variety of patterning events during development. Establishes the anterior-posterior axis of the embryonic segments and patterns the larval imaginal disks. Binds to the patched (ptc) receptor, which functions in association with smoothened (smo), to activate the transcription of target genes wingless (wg), decapentaplegic (dpp) and ptc. In the absence of hh, ptc represses the constitutive signaling activity of smo through fused (fu). Essential component of a signaling pathway which regulates the Duox-dependent gut immune response to bacterial uracil; required to activate Cad99C-dependent endosome formation, norpA-dependent Ca2+ mobilization and p38 MAPK, which are essential steps in the Duox-dependent production of reactive oxygen species (ROS) in response to intestinal bacterial infection. During photoreceptor differentiation, it up-regulates transcription of Ubr3, which in turn promotes the hh-signaling pathway by mediating the ubiquitination and degradation of cos. This Drosophila persimilis (Fruit fly) protein is Protein hedgehog.